A 556-amino-acid chain; its full sequence is Glucose-6-phosphate isomerase (556 aa).

Glu-360 (proton donor) is an active-site residue. Catalysis depends on residues His-391 and Lys-519.

This sequence belongs to the GPI family.

The protein resides in the cytoplasm. The catalysed reaction is alpha-D-glucose 6-phosphate = beta-D-fructose 6-phosphate. It participates in carbohydrate biosynthesis; gluconeogenesis. It functions in the pathway carbohydrate degradation; glycolysis; D-glyceraldehyde 3-phosphate and glycerone phosphate from D-glucose: step 2/4. Its function is as follows. Catalyzes the reversible isomerization of glucose-6-phosphate to fructose-6-phosphate. The chain is Glucose-6-phosphate isomerase from Acinetobacter baumannii (strain AB0057).